The chain runs to 211 residues: ATP phosphoribosyltransferase (211 aa).

This sequence belongs to the ATP phosphoribosyltransferase family. Short subfamily. As to quaternary structure, heteromultimer composed of HisG and HisZ subunits.

The protein resides in the cytoplasm. The enzyme catalyses 1-(5-phospho-beta-D-ribosyl)-ATP + diphosphate = 5-phospho-alpha-D-ribose 1-diphosphate + ATP. The protein operates within amino-acid biosynthesis; L-histidine biosynthesis; L-histidine from 5-phospho-alpha-D-ribose 1-diphosphate: step 1/9. Its function is as follows. Catalyzes the condensation of ATP and 5-phosphoribose 1-diphosphate to form N'-(5'-phosphoribosyl)-ATP (PR-ATP). Has a crucial role in the pathway because the rate of histidine biosynthesis seems to be controlled primarily by regulation of HisG enzymatic activity. The protein is ATP phosphoribosyltransferase of Pseudomonas entomophila (strain L48).